The sequence spans 673 residues: UvrABC system protein B (673 aa).

The Helicase ATP-binding domain occupies Glu26–Arg183. Gly39–Thr46 lines the ATP pocket. Positions Tyr92–Val115 match the Beta-hairpin motif. The Helicase C-terminal domain occupies Gln431 to Leu597. The region spanning Gln633–Leu668 is the UVR domain.

This sequence belongs to the UvrB family. Forms a heterotetramer with UvrA during the search for lesions. Interacts with UvrC in an incision complex.

It is found in the cytoplasm. In terms of biological role, the UvrABC repair system catalyzes the recognition and processing of DNA lesions. A damage recognition complex composed of 2 UvrA and 2 UvrB subunits scans DNA for abnormalities. Upon binding of the UvrA(2)B(2) complex to a putative damaged site, the DNA wraps around one UvrB monomer. DNA wrap is dependent on ATP binding by UvrB and probably causes local melting of the DNA helix, facilitating insertion of UvrB beta-hairpin between the DNA strands. Then UvrB probes one DNA strand for the presence of a lesion. If a lesion is found the UvrA subunits dissociate and the UvrB-DNA preincision complex is formed. This complex is subsequently bound by UvrC and the second UvrB is released. If no lesion is found, the DNA wraps around the other UvrB subunit that will check the other stand for damage. This chain is UvrABC system protein B, found in Salmonella agona (strain SL483).